Consider the following 889-residue polypeptide: DNA mismatch repair protein MutS (889 aa).

641–648 (GPNMAGKS) is an ATP binding site.

Belongs to the DNA mismatch repair MutS family.

Functionally, this protein is involved in the repair of mismatches in DNA. It is possible that it carries out the mismatch recognition step. This protein has a weak ATPase activity. The protein is DNA mismatch repair protein MutS of Orientia tsutsugamushi (strain Ikeda) (Rickettsia tsutsugamushi).